Here is a 558-residue protein sequence, read N- to C-terminus: Formate--tetrahydrofolate ligase (558 aa).

66 to 73 (TPAGEGKT) serves as a coordination point for ATP.

The protein belongs to the formate--tetrahydrofolate ligase family.

It catalyses the reaction (6S)-5,6,7,8-tetrahydrofolate + formate + ATP = (6R)-10-formyltetrahydrofolate + ADP + phosphate. It functions in the pathway one-carbon metabolism; tetrahydrofolate interconversion. In Neisseria gonorrhoeae (strain ATCC 700825 / FA 1090), this protein is Formate--tetrahydrofolate ligase.